We begin with the raw amino-acid sequence, 234 residues long: Endonuclease V (234 aa).

The Mg(2+) site is built by D36 and D104.

The protein belongs to the endonuclease V family. It depends on Mg(2+) as a cofactor.

It is found in the cytoplasm. The enzyme catalyses Endonucleolytic cleavage at apurinic or apyrimidinic sites to products with a 5'-phosphate.. Its function is as follows. DNA repair enzyme involved in the repair of deaminated bases. Selectively cleaves double-stranded DNA at the second phosphodiester bond 3' to a deoxyinosine leaving behind the intact lesion on the nicked DNA. In Yersinia enterocolitica serotype O:8 / biotype 1B (strain NCTC 13174 / 8081), this protein is Endonuclease V.